Here is a 247-residue protein sequence, read N- to C-terminus: DNA repair protein RecO (247 aa).

The protein belongs to the RecO family.

Its function is as follows. Involved in DNA repair and RecF pathway recombination. This chain is DNA repair protein RecO, found in Caldanaerobacter subterraneus subsp. tengcongensis (strain DSM 15242 / JCM 11007 / NBRC 100824 / MB4) (Thermoanaerobacter tengcongensis).